Here is a 328-residue protein sequence, read N- to C-terminus: Probable voltage-gated potassium channel subunit beta (328 aa).

NADP(+) contacts are provided by Trp-21, Gln-27, and Asp-49. The active-site Proton donor/acceptor is Tyr-54. Positions 152, 178, 207, 208, 209, 210, 211, 218, 229, 285, 287, 291, 294, and 295 each coordinate NADP(+).

It belongs to the shaker potassium channel beta subunit family. Forms heteromultimeric complexes with potassium channel alpha subunits. In terms of tissue distribution, expressed in late-developed leaves with the highest expression in the flag leaf (at protein level).

Functionally, probable accessory potassium channel protein which modulates the activity of the pore-forming alpha subunit. In Oryza sativa subsp. japonica (Rice), this protein is Probable voltage-gated potassium channel subunit beta (KOB1).